The primary structure comprises 131 residues: MTAANQNYGTGRRKSSSARVFIKPGSGKITINQRELDVYFGRETSRMIVRQPLELVEMTEKLDLYITVKGGGISGQAGAIRHGITRALMEYDESLRPVLRAAGFVTRDARRVERKKVGLRKARRRPQFSKR.

Belongs to the universal ribosomal protein uS9 family.

The polypeptide is Small ribosomal subunit protein uS9 (Mannheimia succiniciproducens (strain KCTC 0769BP / MBEL55E)).